Consider the following 156-residue polypeptide: 6,7-dimethyl-8-ribityllumazine synthase (156 aa).

5-amino-6-(D-ribitylamino)uracil is bound by residues F22, A57–E59, and C81–I83. G86–T87 contacts (2S)-2-hydroxy-3-oxobutyl phosphate. H89 functions as the Proton donor in the catalytic mechanism. A 5-amino-6-(D-ribitylamino)uracil-binding site is contributed by F114. A (2S)-2-hydroxy-3-oxobutyl phosphate-binding site is contributed by R128.

It belongs to the DMRL synthase family. Forms an icosahedral capsid composed of 60 subunits, arranged as a dodecamer of pentamers.

The catalysed reaction is (2S)-2-hydroxy-3-oxobutyl phosphate + 5-amino-6-(D-ribitylamino)uracil = 6,7-dimethyl-8-(1-D-ribityl)lumazine + phosphate + 2 H2O + H(+). It functions in the pathway cofactor biosynthesis; riboflavin biosynthesis; riboflavin from 2-hydroxy-3-oxobutyl phosphate and 5-amino-6-(D-ribitylamino)uracil: step 1/2. Functionally, catalyzes the formation of 6,7-dimethyl-8-ribityllumazine by condensation of 5-amino-6-(D-ribitylamino)uracil with 3,4-dihydroxy-2-butanone 4-phosphate. This is the penultimate step in the biosynthesis of riboflavin. The chain is 6,7-dimethyl-8-ribityllumazine synthase from Vibrio cholerae serotype O1 (strain ATCC 39315 / El Tor Inaba N16961).